The primary structure comprises 393 residues: Digeranylgeranylglycerophospholipid reductase 2 (393 aa).

FAD is bound by residues D33, C44, A45, G47, R100, A124, D280, G292, and I293.

Belongs to the geranylgeranyl reductase family. DGGGPL reductase subfamily. It depends on FAD as a cofactor.

The enzyme catalyses a 2,3-bis-O-phytanyl-sn-glycerol 1-phospholipid + 8 A = a 2,3-bis-O-(geranylgeranyl)-sn-glycerol 1-phospholipid + 8 AH2. The catalysed reaction is 2,3-bis-O-(phytanyl)-sn-glycerol 1-phosphate + 8 A = 2,3-bis-O-(geranylgeranyl)-sn-glycerol 1-phosphate + 8 AH2. It carries out the reaction CDP-2,3-bis-O-(geranylgeranyl)-sn-glycerol + 8 AH2 = CDP-2,3-bis-O-(phytanyl)-sn-glycerol + 8 A. It catalyses the reaction archaetidylserine + 8 AH2 = 2,3-bis-O-phytanyl-sn-glycero-3-phospho-L-serine + 8 A. Its pathway is membrane lipid metabolism; glycerophospholipid metabolism. Its function is as follows. Is involved in the reduction of 2,3-digeranylgeranylglycerophospholipids (unsaturated archaeols) into 2,3-diphytanylglycerophospholipids (saturated archaeols) in the biosynthesis of archaeal membrane lipids. Catalyzes the formation of archaetidic acid (2,3-di-O-phytanyl-sn-glyceryl phosphate) from 2,3-di-O-geranylgeranylglyceryl phosphate (DGGGP) via the hydrogenation of each double bond of the isoprenoid chains. Is also probably able to reduce double bonds of geranyl groups in CDP-2,3-bis-O-(geranylgeranyl)-sn-glycerol and archaetidylserine, thus acting at various stages in the biosynthesis of archaeal membrane lipids. This chain is Digeranylgeranylglycerophospholipid reductase 2, found in Methanosphaera stadtmanae (strain ATCC 43021 / DSM 3091 / JCM 11832 / MCB-3).